The chain runs to 833 residues: Leucine--tRNA ligase (833 aa).

A 'HIGH' region motif is present at residues Pro41–His52. Residues Lys610 to Ser614 carry the 'KMSKS' region motif. Residue Lys613 participates in ATP binding.

This sequence belongs to the class-I aminoacyl-tRNA synthetase family.

Its subcellular location is the cytoplasm. The catalysed reaction is tRNA(Leu) + L-leucine + ATP = L-leucyl-tRNA(Leu) + AMP + diphosphate. This chain is Leucine--tRNA ligase, found in Streptococcus pyogenes serotype M5 (strain Manfredo).